The sequence spans 167 residues: Methyl-coenzyme M reductase II operon protein D (167 aa).

MCR is composed of three subunits: alpha, beta, and gamma. The function of protein D is not known.

This chain is Methyl-coenzyme M reductase II operon protein D (mrtD), found in Methanocaldococcus jannaschii (strain ATCC 43067 / DSM 2661 / JAL-1 / JCM 10045 / NBRC 100440) (Methanococcus jannaschii).